The following is a 224-amino-acid chain: Ribonuclease HII (224 aa).

Positions 36–224 constitute an RNase H type-2 domain; that stretch reads RGVAGVDEVG…RRSFLRRFLG (189 aa). Aspartate 42, glutamate 43, and aspartate 138 together coordinate a divalent metal cation.

Belongs to the RNase HII family. The cofactor is Mn(2+). Mg(2+) is required as a cofactor.

It localises to the cytoplasm. The enzyme catalyses Endonucleolytic cleavage to 5'-phosphomonoester.. Its function is as follows. Endonuclease that specifically degrades the RNA of RNA-DNA hybrids. The polypeptide is Ribonuclease HII (Parasynechococcus marenigrum (strain WH8102)).